Consider the following 558-residue polypeptide: Atlastin-1 (558 aa).

Positions Met1 to Glu27 are disordered. The N-terminal hypervariable region (HVR) stretch occupies residues Met1–Pro34. The Cytoplasmic segment spans residues Met1–Ala449. Residues Ser10, Ser22, and Ser23 each carry the phosphoserine modification. The GB1/RHD3-type G domain occupies Asp64–Ser309. Positions 77, 78, 79, 80, 81, 82, 148, 217, 218, 276, and 279 each coordinate GDP. Arg77, Lys78, Gly79, Lys80, Ser81, and Phe82 together coordinate GTP. Residue Ser81 coordinates Mg(2+). Positions 217, 218, and 276 each coordinate GTP. The 3HB (three-helix bundle) domain stretch occupies residues Met347–Ser438. N6-acetyllysine is present on Lys395. Residues Glu412–Lys439 adopt a coiled-coil conformation. The interval Lys439–Thr447 is linker. A helical membrane pass occupies residues Thr450–Leu470. Position 471 (Asp471) is a topological domain, lumenal. A helical transmembrane segment spans residues Ile472–Ala492. The Cytoplasmic portion of the chain corresponds to Tyr493–Met558. The segment at Asn521–Met558 is autoinhibitory domain.

The protein belongs to the TRAFAC class dynamin-like GTPase superfamily. GB1/RHD3 GTPase family. GB1 subfamily. In terms of assembly, monomeric and homodimeric. The homodimer, transiently formed by two molecules on opposing membranes, is the active form mediating ER membrane fusion. Interacts with REEP1, REEP5, RTN3 and RTN4 (via the transmembrane region); these proteins are involved in endoplasmic reticulum tubular network organization. Interacts with ZFYVE27; both proteins are involved in endoplasmic reticulum tubular network organization. Interacts with ARL6IP1; both proteins are involved in endoplasmic reticulum tubular network organization. Interacts with SPAST; the interaction is direct, could recruit SPAST to Golgi membranes. Interacts (via N-terminal region) with MAP4K4 (via CNH regulatory domain). May interact with TMED2. Interacts with CPT1C. Post-translationally, phosphorylated. Phosphorylation, by different kinases, of the N-terminal hypervariable region (HVR) regulates the ATL1-mediated membrane tethering step.

Its subcellular location is the endoplasmic reticulum membrane. It localises to the golgi apparatus membrane. The protein resides in the cell projection. It is found in the axon. The catalysed reaction is GTP + H2O = GDP + phosphate + H(+). Atlastin-1 (ATL1) is a membrane-anchored GTPase that mediates the GTP-dependent fusion of endoplasmic reticulum (ER) membranes, maintaining the continuous ER network. It facilitates the formation of three-way junctions where ER tubules intersect. Two atlastin-1 on neighboring ER tubules bind GTP and form loose homodimers through the GB1/RHD3-type G domains and 3HB regions. Upon GTP hydrolysis, the 3HB regions tighten, pulling the membranes together to drive their fusion. After fusion, the homodimer disassembles upon release of inorganic phosphate (Pi). Subsequently, GDP dissociates, resetting the monomers to a conformation ready for a new fusion cycle. May also regulate more or less directly Golgi biogenesis. Indirectly regulates axonal development. In Pongo abelii (Sumatran orangutan), this protein is Atlastin-1.